We begin with the raw amino-acid sequence, 132 residues long: Translation initiation factor 5A (132 aa).

Lys36 is subject to Hypusine.

It belongs to the eIF-5A family.

It localises to the cytoplasm. In terms of biological role, functions by promoting the formation of the first peptide bond. The protein is Translation initiation factor 5A (eIF5A) of Caldivirga maquilingensis (strain ATCC 700844 / DSM 13496 / JCM 10307 / IC-167).